Reading from the N-terminus, the 362-residue chain is UDP-N-acetylglucosamine--N-acetylmuramyl-(pentapeptide) pyrophosphoryl-undecaprenol N-acetylglucosamine transferase (362 aa).

UDP-N-acetyl-alpha-D-glucosamine contacts are provided by residues 15 to 17 (TGG), asparagine 127, arginine 165, serine 191, isoleucine 247, 266 to 271 (ALTVSE), and glutamine 292.

It belongs to the glycosyltransferase 28 family. MurG subfamily.

It is found in the cell inner membrane. The enzyme catalyses di-trans,octa-cis-undecaprenyl diphospho-N-acetyl-alpha-D-muramoyl-L-alanyl-D-glutamyl-meso-2,6-diaminopimeloyl-D-alanyl-D-alanine + UDP-N-acetyl-alpha-D-glucosamine = di-trans,octa-cis-undecaprenyl diphospho-[N-acetyl-alpha-D-glucosaminyl-(1-&gt;4)]-N-acetyl-alpha-D-muramoyl-L-alanyl-D-glutamyl-meso-2,6-diaminopimeloyl-D-alanyl-D-alanine + UDP + H(+). Its pathway is cell wall biogenesis; peptidoglycan biosynthesis. Cell wall formation. Catalyzes the transfer of a GlcNAc subunit on undecaprenyl-pyrophosphoryl-MurNAc-pentapeptide (lipid intermediate I) to form undecaprenyl-pyrophosphoryl-MurNAc-(pentapeptide)GlcNAc (lipid intermediate II). The chain is UDP-N-acetylglucosamine--N-acetylmuramyl-(pentapeptide) pyrophosphoryl-undecaprenol N-acetylglucosamine transferase from Shewanella oneidensis (strain ATCC 700550 / JCM 31522 / CIP 106686 / LMG 19005 / NCIMB 14063 / MR-1).